We begin with the raw amino-acid sequence, 231 residues long: MTNKTRKETNEIKNNITLPPNIKTEVNRTSKYDFTNLSKDLEIVYALIKITGFDEYLPFNIENLNKIFIKEKISPYPYLLNLIKDLIILFVIGLIITIIGLLMYEPTRPKVISIIASILYKLKIKEKPKPKKKETIKLPKPPKIYISDVIYSLGDTVRIEISSEIDIGNNLYILSPTNKKYKIELIKTGKNKYLGLFKIPENEVPGQYFIIYKPENLSIGGFLVVDIKKEM.

Residues 86-106 (LIILFVIGLIITIIGLLMYEP) form a helical membrane-spanning segment.

The protein localises to the membrane. This is an uncharacterized protein from Methanocaldococcus jannaschii (strain ATCC 43067 / DSM 2661 / JAL-1 / JCM 10045 / NBRC 100440) (Methanococcus jannaschii).